The sequence spans 349 residues: Twinfilin-2-B (349 aa).

ADF-H domains lie at Gln4–Ser139 and Gly177–His313. The tract at residues Gln321 to Ser349 is disordered.

It belongs to the actin-binding proteins ADF family. Twinfilin subfamily. Interacts with G-actin; ADP-actin form and capping protein (CP).

Its subcellular location is the cytoplasm. It localises to the cytoskeleton. The protein localises to the perinuclear region. Actin-binding protein involved in motile and morphological processes. Inhibits actin polymerization, likely by sequestering G-actin. This is Twinfilin-2-B (twf2-b) from Xenopus laevis (African clawed frog).